Here is a 237-residue protein sequence, read N- to C-terminus: Large ribosomal subunit protein uL2 (237 aa).

The disordered stretch occupies residues F202–R237. Over residues K225 to R237 the composition is skewed to basic residues.

The protein belongs to the universal ribosomal protein uL2 family. As to quaternary structure, part of the 50S ribosomal subunit. Forms a bridge to the 30S subunit in the 70S ribosome.

One of the primary rRNA binding proteins. Required for association of the 30S and 50S subunits to form the 70S ribosome, for tRNA binding and peptide bond formation. It has been suggested to have peptidyltransferase activity; this is somewhat controversial. Makes several contacts with the 16S rRNA in the 70S ribosome. This is Large ribosomal subunit protein uL2 from Methanococcoides burtonii (strain DSM 6242 / NBRC 107633 / OCM 468 / ACE-M).